Reading from the N-terminus, the 323-residue chain is PI-PLC X domain-containing protein 1 (323 aa).

Residues 30–206 enclose the PI-PLC X-box domain; the sequence is RLWDVPLHHL…QVIVSYEDES (177 aa).

As to expression, widely expressed.

It localises to the cytoplasm. The sequence is that of PI-PLC X domain-containing protein 1 (PLCXD1) from Homo sapiens (Human).